We begin with the raw amino-acid sequence, 98 residues long: YcgL domain-containing protein Ping_1076 (98 aa).

The YcgL domain occupies 1–85 (MLCAVYKSIR…PPVNHLQEHK (85 aa)). The segment at 75–98 (PPPVNHLQEHKDWKKKRQENKNEI) is disordered.

This is YcgL domain-containing protein Ping_1076 from Psychromonas ingrahamii (strain DSM 17664 / CCUG 51855 / 37).